A 141-amino-acid chain; its full sequence is Large ribosomal subunit protein uL11 (141 aa).

It belongs to the universal ribosomal protein uL11 family. In terms of assembly, part of the ribosomal stalk of the 50S ribosomal subunit. Interacts with L10 and the large rRNA to form the base of the stalk. L10 forms an elongated spine to which L12 dimers bind in a sequential fashion forming a multimeric L10(L12)X complex. In terms of processing, one or more lysine residues are methylated.

Forms part of the ribosomal stalk which helps the ribosome interact with GTP-bound translation factors. This chain is Large ribosomal subunit protein uL11, found in Fervidobacterium nodosum (strain ATCC 35602 / DSM 5306 / Rt17-B1).